The chain runs to 224 residues: Ribonuclease T (224 aa).

The Exonuclease domain maps to 32 to 206 (VVVDVETGGF…YDTEKTAELF (175 aa)). Residues D35, E37, H193, and D198 each coordinate Mg(2+). Catalysis depends on H193, which acts as the Proton donor/acceptor.

It belongs to the RNase T family. In terms of assembly, homodimer. Mg(2+) is required as a cofactor.

Trims short 3' overhangs of a variety of RNA species, leaving a one or two nucleotide 3' overhang. Responsible for the end-turnover of tRNA: specifically removes the terminal AMP residue from uncharged tRNA (tRNA-C-C-A). Also appears to be involved in tRNA biosynthesis. This chain is Ribonuclease T, found in Pseudomonas fluorescens (strain Pf0-1).